Consider the following 772-residue polypeptide: Acylamino-acid-releasing enzyme 2 (772 aa).

Catalysis depends on charge relay system residues Ser-617, Asp-708, and His-740.

The protein belongs to the peptidase S9C family. Homotetramer.

The protein resides in the cytoplasm. It carries out the reaction Cleavage of an N-acetyl or N-formyl amino acid from the N-terminus of a polypeptide.. In terms of biological role, catalyzes the hydrolysis of the N-terminal peptide bond of an N-acetylated peptide to generate an N-acetylated amino acid and a peptide with a free N-terminus. The chain is Acylamino-acid-releasing enzyme 2 from Oryza sativa subsp. japonica (Rice).